A 3375-amino-acid polypeptide reads, in one-letter code: Basement membrane proteoglycan (3375 aa).

Residues 1 to 22 (MKRSSTVLAALLALLLVATNDA) form the signal peptide. The region spanning 45-130 (VQITVFPSEK…NTVEARATLS (86 aa)) is the Ig-like C2-type 1 domain. 11 disulfide bridges follow: Cys66–Cys114, Cys149–Cys161, Cys156–Cys174, Cys168–Cys183, Cys190–Cys202, Cys197–Cys215, Cys209–Cys224, Cys233–Cys246, Cys240–Cys259, Cys253–Cys268, and Cys293–Cys344. 3 consecutive LDL-receptor class A domains span residues 148 to 184 (QCMA…ANCP), 189 to 225 (TCEP…LNCN), and 232 to 269 (DCKP…VGCV). The 85-residue stretch at 271–355 (PTVVDPPQTN…AINVKGRVLA (85 aa)) folds into the Ig-like C2-type 2 domain. A disordered region spans residues 364-385 (VDDPRPQPPQPPTAPPQRASCD). A compositionally biased stretch (pro residues) spans 369–378 (PQPPQPPTAP). Intrachain disulfides connect Cys384–Cys400, Cys402–Cys411, and Cys414–Cys429. The 48-residue stretch at 384–431 (CDTRGAVTPYPNNYGTCECKSQVTGPNCDQCKPGAFHLSEKSPEGCLK) folds into the Laminin EGF-like 1; truncated domain. The 10-residue stretch at 432-441 (CFCFGVSNDC) folds into the Laminin EGF-like 2; first part domain. The Laminin IV type A 1 domain occupies 450 to 633 (KDRLMFAGDA…PDGLALEVEQ (184 aa)). 4 cysteine pairs are disulfide-bonded: Cys634–Cys648, Cys636–Cys689, Cys691–Cys700, and Cys703–Cys718. In terms of domain architecture, Laminin EGF-like 2; second part spans 634 to 666 (CVCPPGYLGTSCEDCAPGYERSGYGPYLGTCVP). Positions 674 to 720 (CGPGAVAPTAPAQGQCQCKASVIGPNCDRCAPNSFGLAPTNPQGCIP) constitute a Laminin EGF-like 3; truncated domain. The 10-residue stretch at 721–730 (CFCSGVTQQC) folds into the Laminin EGF-like 4; first part domain. One can recognise a Laminin IV type A 2 domain in the interval 740–921 (VSIDYARGDR…QGLTAAEVEQ (182 aa)). Positions 922-954 (CICPPGYVGTSCEDCAPGYSRTGGGLYLGLCEK) constitute a Laminin EGF-like 4; second part domain. Disulfide bonds link Cys955–Cys964, Cys957–Cys971, Cys974–Cys983, Cys986–Cys1002, Cys1011–Cys1021, Cys1013–Cys1027, Cys1030–Cys1039, Cys1042–Cys1058, Cys1061–Cys1069, Cys1063–Cys1079, Cys1082–Cys1091, Cys1094–Cys1109, Cys1152–Cys1200, Cys1247–Cys1294, and Cys1338–Cys1384. Laminin EGF-like domains lie at 955 to 1004 (CECN…DCQP), 1011 to 1060 (CHCN…DCTP), and 1061 to 1111 (CPCP…VCEP). 15 consecutive Ig-like C2-type domains span residues 1126–1222 (PHEV…KRIS), 1226–1311 (PQPV…AVLE), 1319–1401 (PKVD…EPVQ), 1410–1499 (PQRG…ARLN), 1503–1585 (PQAI…RPVE), 1588–1680 (PARV…TPAT), 1690–1785 (PQVE…STLN), 1793–1878 (PRPV…VRLE), 1886–1970 (PTAV…GNVN), 1973–2069 (PSLT…IYIE), 2073–2163 (PSRI…AVHV), 2173–2260 (PKVE…TAVS), 2263–2343 (QQDK…GFVT), 2349–2435 (PDTI…RTVL), and 2446–2530 (TFTV…VDLQ). Residues 1388 to 1400 (DPSDNTPLQSEPV) show a composition bias toward polar residues. 2 disordered regions span residues 1388-1426 (DPSD…QTVN) and 1478-1497 (EYEC…PPAR). A glycan (N-linked (GlcNAc...) asparagine) is linked at Asn1422. Disulfide bonds link Cys1435/Cys1481, Cys1527/Cys1573, Cys1618/Cys1663, and Cys1719/Cys1767. Over residues 1481–1497 (CTSTEPDGSTQLSPPAR) the composition is skewed to polar residues. The disordered stretch occupies residues 1773-1792 (NSPPVKTNPSTLNVTPEGTP). Polar residues predominate over residues 1776–1788 (PVKTNPSTLNVTP). 15 cysteine pairs are disulfide-bonded: Cys1814-Cys1861, Cys1907-Cys1954, Cys1998-Cys2053, Cys2099-Cys2147, Cys2195-Cys2242, Cys2284-Cys2329, Cys2374-Cys2420, Cys2467-Cys2514, Cys2713-Cys2725, Cys2719-Cys2736, Cys2738-Cys2747, Cys2754-Cys2764, Cys2759-Cys2773, Cys2775-Cys2784, and Cys2935-Cys2960. The interval 1880–1918 (TEDQEPPTAVVEPRTWNGKPGERHQFRCITTGSPTPKIT) is disordered. Polar residues predominate over residues 1907-1918 (CITTGSPTPKIT). N-linked (GlcNAc...) asparagine glycosylation is present at Asn2476. Positions 2532–2713 (DDFIPVIDGE…PSSVVKYDAC (182 aa)) constitute a Laminin G-like 1 domain. One can recognise a Laminin G-like 2 domain in the interval 2793–2960 (PLGFTSDTSF…LSSSGDISSC (168 aa)). Residue Asn2950 is glycosylated (N-linked (GlcNAc...) asparagine). Positions 2952 to 2963 (SSSGDISSCEES) are enriched in low complexity. Residues 2952 to 3124 (SSSGDISSCE…GTLPPDSSSE (173 aa)) form a disordered region. Composition is skewed to acidic residues over residues 2979-2990 (EEPEAVIEEPTT) and 2999-3010 (PITEEPTEEPTT). Positions 3011 to 3033 (TEEPTTTEEPTTTTEEPTTTTTE) are enriched in low complexity. Residues 3034-3044 (EPYHIYETSRD) show a composition bias toward basic and acidic residues. Positions 3049 to 3079 (IIIPVETTTTSTTTTSTTEEPEAEPALVLPT) are enriched in low complexity. Residues 3081 to 3094 (PVEENDVSDEEEEI) show a composition bias toward acidic residues. Cystine bridges form between Cys3141/Cys3152, Cys3146/Cys3162, Cys3164/Cys3173, and Cys3333/Cys3359. N-linked (GlcNAc...) asparagine glycans are attached at residues Asn3143 and Asn3156. A Laminin G-like 3 domain is found at 3180 to 3359 (EHAARFDGDA…AIDGKNVKPC (180 aa)).

Component of an integrin containing attachment complex, composed of at least pat-2, pat-3, pat-4, pat-6, unc-52, unc-97 and unc-112. Detected on embryonic and adult body wall muscle cells (at protein level). Found in the basement membrane of all contractile tissues (at protein level). Expressed in gonadal sheath cells and spermatheca.

It is found in the secreted. The protein localises to the extracellular space. The protein resides in the extracellular matrix. It localises to the basement membrane. Its subcellular location is the cytoplasm. It is found in the myofibril. The protein localises to the sarcomere. The protein resides in the m line. Component of an integrin containing attachment complex, which is required for muscle development and maintenance. Probable structural role in myofilament assembly and/or attachment of the myofilament lattice to the cell membrane. May be an extracellular anchor for integrin receptors in body wall muscles and myoepithelial sheath cells. During the formation of neuromuscular junctions at the larval stage, negatively regulates membrane protrusion from body wall muscles, probably downstream of the integrin complex formed by pat-2 and pat-3. Involved in ovulation. Required for normal lifespan. The polypeptide is Basement membrane proteoglycan (Caenorhabditis elegans).